The primary structure comprises 310 residues: 4-hydroxyproline 2-epimerase (310 aa).

The active-site Proton acceptor is the Cys-88. Residues 89-90 (GH), His-208, and Asp-232 contribute to the substrate site. The active-site Proton donor is Cys-236. 237–238 (GT) is a binding site for substrate.

This sequence belongs to the proline racemase family.

The enzyme catalyses trans-4-hydroxy-L-proline = cis-4-hydroxy-D-proline. In terms of biological role, catalyzes the epimerization of trans-4-hydroxy-L-proline (t4LHyp) to cis-4-hydroxy-D-proline (c4DHyp). Is likely involved in a degradation pathway that converts t4LHyp to alpha-ketoglutarate. Displays no proline racemase activity. This Pseudomonas fluorescens (strain ATCC BAA-477 / NRRL B-23932 / Pf-5) protein is 4-hydroxyproline 2-epimerase.